A 199-amino-acid polypeptide reads, in one-letter code: UPF0301 protein Ajs_3573 (199 aa).

Belongs to the UPF0301 (AlgH) family.

In Acidovorax sp. (strain JS42), this protein is UPF0301 protein Ajs_3573.